The primary structure comprises 386 residues: Patatin group M-2 (386 aa).

The signal sequence occupies residues 1 to 23 (MATTKSFLILFFMILATTSSTCA). The PNPLA domain maps to 32–229 (LSIDGGGIKG…TVGDPALLSL (198 aa)). The short motif at 36-41 (GGGIKG) is the GXGXXG element. Residues 75–79 (GTSTG) carry the GXSXG motif. Ser-77 (nucleophile) is an active-site residue. An N-linked (GlcNAc...) asparagine glycan is attached at Asn-115. The active-site Proton acceptor is Asp-215. Positions 215-217 (DGG) match the DGA/G motif. Residues 321 to 384 (ENALTGTTTE…DRKKLRANKA (64 aa)) are a coiled coil.

The protein belongs to the patatin family. As to expression, tuber.

It localises to the vacuole. Probable lipolytic acyl hydrolase (LAH), an activity which is thought to be involved in the response of tubers to pathogens. This Solanum tuberosum (Potato) protein is Patatin group M-2.